Consider the following 267-residue polypeptide: MSRLATRFEKLQSQQRKALVSYVMAGDPQPQVTVPLLHKMVAAGVDVIELGLPFSDPMADGPVIALAAERALAAGTNTLDALNMVKEFREQDQETPVVLMGYLNPVEVIGYEKFVSYAKQCGVDGLLLVDLPPEESKEFGAILKQHDMDQIFLLAPTSTDQRIQHVANQASGFIYYVSLKGVTGAATLDTSEAAARIEKIKGMTNVPVGVGFGISDAASAKAMGSVADAVIVGSAFVKSFATLAADEAVEQTVNKVKELRAALDELV.

Residues Glu49 and Asp60 each act as proton acceptor in the active site.

Belongs to the TrpA family. Tetramer of two alpha and two beta chains.

The catalysed reaction is (1S,2R)-1-C-(indol-3-yl)glycerol 3-phosphate + L-serine = D-glyceraldehyde 3-phosphate + L-tryptophan + H2O. Its pathway is amino-acid biosynthesis; L-tryptophan biosynthesis; L-tryptophan from chorismate: step 5/5. Functionally, the alpha subunit is responsible for the aldol cleavage of indoleglycerol phosphate to indole and glyceraldehyde 3-phosphate. The sequence is that of Tryptophan synthase alpha chain from Acinetobacter baumannii (strain AB307-0294).